The primary structure comprises 116 residues: UPF0102 protein ELI_05985 (116 aa).

It belongs to the UPF0102 family.

This chain is UPF0102 protein ELI_05985, found in Erythrobacter litoralis (strain HTCC2594).